Here is a 370-residue protein sequence, read N- to C-terminus: 3-dehydroquinate synthase (370 aa).

NAD(+) contacts are provided by residues 70-75, 104-108, 128-129, Lys141, Lys150, and 168-171; these read DAEDGK, GAATD, TT, and TLET. Zn(2+) contacts are provided by Glu183, His246, and His262.

The protein belongs to the sugar phosphate cyclases superfamily. Dehydroquinate synthase family. The cofactor is Co(2+). It depends on Zn(2+) as a cofactor. Requires NAD(+) as cofactor.

Its subcellular location is the cytoplasm. It carries out the reaction 7-phospho-2-dehydro-3-deoxy-D-arabino-heptonate = 3-dehydroquinate + phosphate. Its pathway is metabolic intermediate biosynthesis; chorismate biosynthesis; chorismate from D-erythrose 4-phosphate and phosphoenolpyruvate: step 2/7. Functionally, catalyzes the conversion of 3-deoxy-D-arabino-heptulosonate 7-phosphate (DAHP) to dehydroquinate (DHQ). The sequence is that of 3-dehydroquinate synthase from Rhodococcus opacus (strain B4).